Consider the following 159-residue polypeptide: Protein phosphatase 1 regulatory subunit 17 (159 aa).

Disordered stretches follow at residues 1–79 (MSTE…HIPP) and 98–127 (RIPK…PALH). Basic and acidic residues-rich tracts occupy residues 62 to 73 (SDQKKPRRKDTP) and 111 to 124 (SDME…KDTP). Phosphothreonine; by PKG/PRKG1 is present on residues Thr72 and Thr123.

Substrate for cGMP-dependent protein kinase. Phosphorylation of Thr-72 and Thr-123 is required for its phosphatase activity. Phosphorylated by PRKG1 isoform alpha. As to expression, expressed in Purkinje cells of the cerebellum, hippocampus, pons, medulla and eye.

Its function is as follows. Inhibits phosphatase activities of protein phosphatase 1 (PP1) and protein phosphatase 2A (PP2A) complexes. The protein is Protein phosphatase 1 regulatory subunit 17 (Ppp1r17) of Mus musculus (Mouse).